The chain runs to 49 residues: Large ribosomal subunit protein bL33B (49 aa).

It belongs to the bacterial ribosomal protein bL33 family.

This chain is Large ribosomal subunit protein bL33B (rpmG2), found in Listeria innocua serovar 6a (strain ATCC BAA-680 / CLIP 11262).